Reading from the N-terminus, the 226-residue chain is Ribonuclease 3 (226 aa).

In terms of domain architecture, RNase III spans 2–129 (IETISKTIKY…LIGAIYLDGG (128 aa)). Residue E42 participates in Mg(2+) binding. Residue D46 is part of the active site. The Mg(2+) site is built by N115 and E118. Residue E118 is part of the active site. One can recognise a DRBM domain in the interval 154-223 (DAKTILQEFI…ASLMLNQIKD (70 aa)).

The protein belongs to the ribonuclease III family. Homodimer. The cofactor is Mg(2+).

The protein localises to the cytoplasm. It catalyses the reaction Endonucleolytic cleavage to 5'-phosphomonoester.. Its function is as follows. Digests double-stranded RNA. Involved in the processing of primary rRNA transcript to yield the immediate precursors to the large and small rRNAs (23S and 16S). Processes some mRNAs, and tRNAs when they are encoded in the rRNA operon. Processes pre-crRNA and tracrRNA of type II CRISPR loci if present in the organism. The chain is Ribonuclease 3 from Ehrlichia canis (strain Jake).